The primary structure comprises 131 residues: CLAVATA3/ESR (CLE)-related protein ESR1 (131 aa).

A signal peptide spans 1-26 (MASRMGMVAIVSLFVCALAASTSVNA). Positions 49–131 (RQQQQGGFIG…IGPPPLSDRY (83 aa)) are disordered. Hydroxyproline occurs at positions 81 and 84. P84 is a glycosylation site (O-linked (Ara...) hydroxyproline).

It belongs to the CLV3/ESR signal peptide family. In terms of processing, the O-glycosylation (arabinosylation) of the hydroxyproline Pro-84 enhances binding affinity of the ESR1p peptide for its receptor. Seed endosperm.

The protein localises to the secreted. It is found in the extracellular space. Extracellular signal peptide that regulates cell fate. This Zea mays (Maize) protein is CLAVATA3/ESR (CLE)-related protein ESR1.